A 327-amino-acid chain; its full sequence is Aspartate--ammonia ligase (327 aa).

This sequence belongs to the class-II aminoacyl-tRNA synthetase family. AsnA subfamily.

The protein localises to the cytoplasm. It carries out the reaction L-aspartate + NH4(+) + ATP = L-asparagine + AMP + diphosphate + H(+). It participates in amino-acid biosynthesis; L-asparagine biosynthesis; L-asparagine from L-aspartate (ammonia route): step 1/1. The polypeptide is Aspartate--ammonia ligase (Fusobacterium nucleatum subsp. nucleatum (strain ATCC 25586 / DSM 15643 / BCRC 10681 / CIP 101130 / JCM 8532 / KCTC 2640 / LMG 13131 / VPI 4355)).